The following is a 980-amino-acid chain: Thrombospondin-4 (980 aa).

The first 42 residues, 1-42 (MTMITPSSKLTLTKGNKSWSSTRCGAFLLLHLVLQPWQRAGA), serve as a signal peptide directing secretion. A Laminin G-like domain is found at 43 to 210 (QATPQVFDLL…LEELKLVVRG (168 aa)). An EGF-like 1 domain is found at 304–343 (PTRRCDSSPCFRGVRCTDTRDGFQCGPCPDGYTGNGITCS). 21 disulfides stabilise this stretch: cysteine 308/cysteine 319, cysteine 313/cysteine 328, cysteine 331/cysteine 342, cysteine 348/cysteine 359, cysteine 353/cysteine 368, cysteine 371/cysteine 395, cysteine 401/cysteine 412, cysteine 406/cysteine 421, cysteine 424/cysteine 436, cysteine 442/cysteine 456, cysteine 450/cysteine 466, cysteine 468/cysteine 480, cysteine 496/cysteine 501, cysteine 506/cysteine 526, cysteine 542/cysteine 562, cysteine 565/cysteine 585, cysteine 601/cysteine 621, cysteine 624/cysteine 644, cysteine 662/cysteine 682, cysteine 702/cysteine 722, and cysteine 738/cysteine 959. Residues 344–381 (DVDECKYHPCYPGVRCTNLAPGFRCDACPVGFTGPMVQ) form the EGF-like 2; calcium-binding domain. Positions 397–434 (DVDECRNGACVLNSICINTLGSYRCGPCKPGYTGDQTR) constitute an EGF-like 3; calcium-binding domain. Residues 438–481 (TERSCRNPEQNPCSVHAQCIEERQGDVTCVCGVGWAGRAGYVCG) enclose the EGF-like 4 domain. TSP type-3 repeat units follow at residues 482–514 (KDVDIDSYPDEELPCSARNCKKDNCKYVPNSGQ), 515–550 (EDADRDGIGDACDEDADGDGILNEQDNCVLTHNVDQ), 551–573 (RNTDKDIFGDACDNCRGVLNNDQ), 574–609 (KDTDGDGKGDACDDDMDGDGIKNILDNCPRVPNRDQ), 610–632 (QDRDGDGVGDACDSCPDVSNPNQ), 633–670 (SDVDNDLVGDSCDTNQDSDGDGHQDSTDNCPTVINSAQ), 671–710 (LDTDKDGIGDECDDDDDNDGMPDLFPPGPDNCRLVPNPAQ), and 711–746 (EDSNNDGVGDICEADFDQDKVIDRIDVCPENAEITL). The interval 596–691 (NILDNCPRVP…CDDDDDNDGM (96 aa)) is disordered. Residues 605 to 615 (PNRDQQDRDGD) show a composition bias toward basic and acidic residues. Asparagine 631 carries N-linked (GlcNAc...) asparagine glycosylation. Residues 659–671 (TDNCPTVINSAQL) are compositionally biased toward polar residues. Residues 679 to 690 (GDECDDDDDNDG) are compositionally biased toward acidic residues. The 215-residue stretch at 750–964 (RAYQTVVLDP…LKYRCNDTIP (215 aa)) folds into the TSP C-terminal domain. Residue asparagine 960 is glycosylated (N-linked (GlcNAc...) asparagine).

Belongs to the thrombospondin family. In terms of assembly, homopentamer; disulfide-linked. Interacts with PTBP3. Interacts (via EGF-like 3; calcium-binding domain) with ATF6 and facilitates its processing, activation and nuclear translocation. Interacts with NOTCH1. In terms of tissue distribution, mainly expressed in astrocytes, and in ressponse to peripheral nerve injury, significantly up-regulated in the dorsal spinal cord (at protein level).

The protein localises to the endoplasmic reticulum. Its subcellular location is the sarcoplasmic reticulum. It is found in the secreted. It localises to the extracellular space. The protein resides in the extracellular matrix. In terms of biological role, adhesive glycoprotein that mediates cell-to-cell and cell-to-matrix interactions and is involved in various processes including cellular proliferation, migration, adhesion and attachment, inflammatory response to CNS injury, regulation of vascular inflammation and adaptive responses of the heart to pressure overload and in myocardial function and remodeling. Binds to structural extracellular matrix (ECM) proteins and modulates the ECM in response to tissue damage, contributing to cardioprotective and adaptive ECM remodeling. Plays a role in ER stress response, via its interaction with the activating transcription factor 6 alpha (ATF6) which produces adaptive ER stress response factors and protects myocardium from pressure overload. May contribute to spinal presynaptic hypersensitivity and neuropathic pain states after peripheral nerve injury. May play a role in regulating protective astrogenesis from the subventricular zone (SVZ) niche after injury in a NOTCH1-dependent manner. This chain is Thrombospondin-4 (Thbs4), found in Rattus norvegicus (Rat).